The following is a 233-amino-acid chain: Small ribosomal subunit protein uS3 (233 aa).

Residues 39–107 enclose the KH type-2 domain; the sequence is VRQYLNKELA…PAQINIAEVR (69 aa).

Belongs to the universal ribosomal protein uS3 family. As to quaternary structure, part of the 30S ribosomal subunit. Forms a tight complex with proteins S10 and S14.

Its function is as follows. Binds the lower part of the 30S subunit head. Binds mRNA in the 70S ribosome, positioning it for translation. The sequence is that of Small ribosomal subunit protein uS3 from Cronobacter sakazakii (strain ATCC BAA-894) (Enterobacter sakazakii).